The sequence spans 461 residues: Cysteine--tRNA ligase (461 aa).

Position 28 (cysteine 28) interacts with Zn(2+). Residues 30-40 (ITVYDLCHIGH) carry the 'HIGH' region motif. The Zn(2+) site is built by cysteine 209, histidine 234, and glutamate 238. A 'KMSKS' region motif is present at residues 266-270 (KMSKS). Lysine 269 serves as a coordination point for ATP.

Belongs to the class-I aminoacyl-tRNA synthetase family. In terms of assembly, monomer. Zn(2+) is required as a cofactor.

The protein resides in the cytoplasm. It carries out the reaction tRNA(Cys) + L-cysteine + ATP = L-cysteinyl-tRNA(Cys) + AMP + diphosphate. This chain is Cysteine--tRNA ligase, found in Salmonella dublin (strain CT_02021853).